We begin with the raw amino-acid sequence, 306 residues long: tRNA dimethylallyltransferase 2 (306 aa).

19-26 is an ATP binding site; it reads GATASGKT. 21-26 contributes to the substrate binding site; it reads TASGKT. The interval 44–47 is interaction with substrate tRNA; it reads DSRQ.

The protein belongs to the IPP transferase family. As to quaternary structure, monomer. Mg(2+) is required as a cofactor.

The enzyme catalyses adenosine(37) in tRNA + dimethylallyl diphosphate = N(6)-dimethylallyladenosine(37) in tRNA + diphosphate. Its function is as follows. Catalyzes the transfer of a dimethylallyl group onto the adenine at position 37 in tRNAs that read codons beginning with uridine, leading to the formation of N6-(dimethylallyl)adenosine (i(6)A). This Citrifermentans bemidjiense (strain ATCC BAA-1014 / DSM 16622 / JCM 12645 / Bem) (Geobacter bemidjiensis) protein is tRNA dimethylallyltransferase 2.